The chain runs to 402 residues: MTPVAVTGMGIAAPNGLGRPTTGRPPWAPRAASAASTRFDPSGYPAQLAGEIPGFRAAEHLPGRLVPQTDRVTRLSLAAADWALADAGVEVAAFDPLDMGVVTASHAGGFEFGQDELQKLLGQGQPVLSAYQSFAWFYAVNSGQISIRHGMKGPSGVVVSDQAGGLDALAQARRLVRKGTPLIVCGAVEPRSAPGAGSPSSPAGGMSDSDEPNRAYLPFDRDGRGYVPGGGRGVVPPLERAEAAPARGAEVYGEAGPLARLPAPHSGRGSTRAHAIRTALDDAGTAPGDIRRVFADGGGRYPNDRAEAEAISEVFGPGRVPVTCPRTMTGRLHSGAAPLDVACALLAMRAGVIPPTVHIDPCPEYDLDLVLYQVRPAALRTALGGARGHGGFNSALVVRAGQ.

Disordered stretches follow at residues 1–30 (MTPVAVTGMGIAAPNGLGRPTTGRPPWAPR) and 188–222 (VEPRSAPGAGSPSSPAGGMSDSDEPNRAYLPFDRD). One can recognise a Ketosynthase family 3 (KS3) domain in the interval 1-400 (MTPVAVTGMG…GFNSALVVRA (400 aa)). A compositionally biased stretch (low complexity) spans 192–205 (SAPGAGSPSSPAGG).

It belongs to the thiolase-like superfamily. Beta-ketoacyl-ACP synthases family.

The protein operates within antifungal biosynthesis; monensin biosynthesis. This Streptomyces virginiae (Streptomyces cinnamonensis) protein is Putative polyketide beta-ketoacyl synthase 2.